Here is a 432-residue protein sequence, read N- to C-terminus: Polyadenylate-binding protein RBP47C (432 aa).

The segment at 1 to 55 (MADVKIQSESESSDSHPVVDNQPPPPPPPPQQPAKEEENQPKTSPTPPPHWMRYP) is disordered. Pro residues predominate over residues 22–32 (QPPPPPPPPQQ). 2 RRM domains span residues 101–183 (KTIW…WASF) and 197–276 (LSIF…PATP). Residues 271–293 (IGPATPRKTNGYQQQGGYMPNGT) are disordered. Residues 277 to 286 (RKTNGYQQQG) show a composition bias toward polar residues. The RRM 3 domain maps to 304-376 (TTIFVGGLDS…QTVRLSWGRN (73 aa)).

The protein belongs to the polyadenylate-binding RBP47 family. In terms of assembly, interacts with the poly(A) tail of mRNA in nucleus. In terms of tissue distribution, expressed in leaves, stems, flowers, and seedlings.

It is found in the nucleus. Its subcellular location is the cytoplasmic granule. In terms of biological role, heterogeneous nuclear ribonucleoprotein (hnRNP)-protein binding the poly(A) tail of mRNA and probably involved in some steps of pre-mRNA maturation. This Arabidopsis thaliana (Mouse-ear cress) protein is Polyadenylate-binding protein RBP47C (RBP47C).